Here is a 261-residue protein sequence, read N- to C-terminus: Succinate dehydrogenase iron-sulfur subunit (261 aa).

The tract at residues 1–23 is disordered; sequence MAELRLPPNSVVKKGKEHKEQEE. A 2Fe-2S ferredoxin-type domain is found at 28-119; sequence RKVKIYRYDP…DIKIYPLPHM (92 aa). [2Fe-2S] cluster is bound by residues cysteine 80, cysteine 85, and cysteine 100. The 4Fe-4S ferredoxin-type domain occupies 161 to 191; it reads GREKLDGLYECILCACCSTSCPSYWWNGDKY. [4Fe-4S] cluster is bound by residues cysteine 171, cysteine 174, and cysteine 177. Cysteine 181 contacts [3Fe-4S] cluster. A ubiquinone is bound at residue tryptophan 186. Residues cysteine 228 and cysteine 234 each coordinate [3Fe-4S] cluster. Cysteine 238 provides a ligand contact to [4Fe-4S] cluster.

Belongs to the succinate dehydrogenase/fumarate reductase iron-sulfur protein family. Part of an enzyme complex containing four subunits: a flavoprotein, an iron-sulfur, cytochrome b-556, and a hydrophobic anchor protein. [2Fe-2S] cluster is required as a cofactor. It depends on [3Fe-4S] cluster as a cofactor. [4Fe-4S] cluster serves as cofactor.

It catalyses the reaction a quinone + succinate = fumarate + a quinol. Its pathway is carbohydrate metabolism; tricarboxylic acid cycle; fumarate from succinate (bacterial route): step 1/1. This Rickettsia felis (strain ATCC VR-1525 / URRWXCal2) (Rickettsia azadi) protein is Succinate dehydrogenase iron-sulfur subunit (sdhB).